Consider the following 931-residue polypeptide: Transportin (931 aa).

HEAT repeat units lie at residues 10-37, 42-79, 88-121, 127-164, 171-201, 214-241, 253-280, 296-421, 430-459, 471-498, 512-545, 553-586, 594-632, 640-693, 704-735, 743-776, 784-819, 827-860, and 869-900; these read GLKQ…EELD, VPDY…QYFE, YIKR…KSCF, LLPA…LDSD, NQLI…YFII, FLKG…VTLV, KDVI…FWTA, PVLV…LSGI, VTLP…GAIA, SKVI…TLSR, LHPL…EEEA, LQMI…AKVV, ELIN…SSIG, SLFF…GIGT, LPHL…KFCL, PDYL…IRMP, VAIR…IVSP, DKFI…INNN, and VYIC…KTSM. One can recognise an Importin N-terminal domain in the interval 32-99; the sequence is IREELDKFHS…KREILPVLSD (68 aa). The disordered stretch occupies residues 317-401; sequence DQGDDSMTPD…DDDDDDDGFE (85 aa). Over residues 358-381 the composition is skewed to low complexity; it reads DNNNNSNNNNSSNNNSSNNNNNNN. The segment covering 382-401 has biased composition (acidic residues); the sequence is NEDDEEYNDDDDDDDDDGFE.

The protein belongs to the importin beta family. Importin beta-2 subfamily. As to quaternary structure, forms a complex with an importin alpha subunit.

It localises to the cytoplasm. The protein resides in the nucleus envelope. Functions in nuclear protein import via a substrate-importin alpha-beta transport complex that passes though the nuclear pore complexes (NPC). Mediates docking of the substrate-importin complex to distinct nucleoporins. The polypeptide is Transportin (tnpo) (Dictyostelium discoideum (Social amoeba)).